The primary structure comprises 747 residues: MDIASPPTSKCITYWKRKVKSEYMRLRQLKRLQANMGAKALYVANFAKVQEKTQILNEEWKKLRVQPVQPMKPVSGHPFLKKCTIESIFPGFDSQDMLMRSLNTVALVPIMYSWSPLQQNFMVEDETVLCNIPYMGDEVKEEDETFIEELINNYDGKVHGEEEMIPGSVLISDAVFLELVDALNQYSDEEEDGHNDPSDGKQDDSKEDLPVTRKRKRHAIEGNKKSSKKQFPNDMIFSAIASMFPENGVPDDMKERYRELTEMSDPNALPPQCTPNIDGPNAKSVQREQSLHSFHTLFCRRCFKYDCFLHPFHATPNVYKRKNKEIKIEPEPCGTDCFLLLEGAKEYAMLHNPRSKCSGRRRRRHPVVSASCSNASASAMAETKEGDSDRDTGNDWASSSSEANSRCQTPTKQKASPAPAQLCVVEAPSEPVEWTGAEESLFRVFHGTYFNNFCSIARLLGTKTCKQVFQFAVKESLILKLPTDELMNPAQKKKRKHRLWAAHCRKIQLKKDNNSTQVYNYQPCDHPDRPCDSTCPCIMTQNFCEKFCQCSPDCQNRFPGCRCKTQCNTKQCPCYLAVRECDPDLCLTCGASEHWDCKVVSCKNCSIQRGLKKHLLLAPSDVAGWGTFIKESVQKNEFISEYCGELISQDEADRRGKVYDKYMSSFLFNLNNDFVVDATRKGNKIRFANHSVNPNCYAKVVMVNGDHRIGIFAKRAIQAGEELFFDYRYSQADALKYVGIERETDVF.

A disordered region spans residues 188–231 (DEEEDGHNDPSDGKQDDSKEDLPVTRKRKRHAIEGNKKSSKKQF). Residues 194–211 (HNDPSDGKQDDSKEDLPV) show a composition bias toward basic and acidic residues. A Glycyl lysine isopeptide (Lys-Gly) (interchain with G-Cter in SUMO2) cross-link involves residue Lys-327. A disordered region spans residues 368 to 414 (VSASCSNASASAMAETKEGDSDRDTGNDWASSSSEANSRCQTPTKQK). The segment covering 369–381 (SASCSNASASAMA) has biased composition (low complexity). Over residues 382–393 (ETKEGDSDRDTG) the composition is skewed to basic and acidic residues. Residues 395–414 (DWASSSSEANSRCQTPTKQK) are compositionally biased toward polar residues. Positions 491–496 (QKKKRK) match the Nuclear localization signal motif. The region spanning 504 to 606 (CRKIQLKKDN…CKVVSCKNCS (103 aa)) is the CXC domain. Positions 613-728 (KHLLLAPSDV…AGEELFFDYR (116 aa)) constitute an SET domain.

Belongs to the class V-like SAM-binding methyltransferase superfamily. Histone-lysine methyltransferase family. EZ subfamily. Component of the PRC2/EED-EZH1 complex, which includes EED, EZH1, SUZ12, RBBP4 and AEBP2. The PRC2/EED-EZH1 is less abundant than the PRC2/EED-EZH2 complex, has weak methyltransferase activity and compacts chromatin in the absence of the methyltransferase cofactor S-adenosyl-L-methionine (SAM). Interacts with EZHIP; the interaction blocks EZH1 methyltransferase activity. As to expression, expressed at high levels in kidney, adrenal gland, testis and brain.

It localises to the nucleus. The enzyme catalyses L-lysyl(27)-[histone H3] + 3 S-adenosyl-L-methionine = N(6),N(6),N(6)-trimethyl-L-lysyl(27)-[histone H3] + 3 S-adenosyl-L-homocysteine + 3 H(+). Its function is as follows. Polycomb group (PcG) protein. Catalytic subunit of the PRC2/EED-EZH1 complex, which methylates 'Lys-27' of histone H3, leading to transcriptional repression of the affected target gene. Able to mono-, di- and trimethylate 'Lys-27' of histone H3 to form H3K27me1, H3K27me2 and H3K27me3, respectively. Required for embryonic stem cell derivation and self-renewal, suggesting that it is involved in safeguarding embryonic stem cell identity. Compared to EZH2-containing complexes, it is less abundant in embryonic stem cells, has weak methyltransferase activity and plays a less critical role in forming H3K27me3, which is required for embryonic stem cell identity and proper differentiation. In Mus musculus (Mouse), this protein is Histone-lysine N-methyltransferase EZH1 (Ezh1).